Reading from the N-terminus, the 278-residue chain is NAD kinase (278 aa).

Asp-67 acts as the Proton acceptor in catalysis. NAD(+)-binding positions include 67-68 (DG), Arg-72, 137-138 (NE), Lys-148, Arg-165, Asp-167, 178-183 (TGYAMS), Ala-202, and Gln-237.

It belongs to the NAD kinase family. A divalent metal cation is required as a cofactor.

The protein resides in the cytoplasm. It catalyses the reaction NAD(+) + ATP = ADP + NADP(+) + H(+). In terms of biological role, involved in the regulation of the intracellular balance of NAD and NADP, and is a key enzyme in the biosynthesis of NADP. Catalyzes specifically the phosphorylation on 2'-hydroxyl of the adenosine moiety of NAD to yield NADP. The chain is NAD kinase from Thermococcus kodakarensis (strain ATCC BAA-918 / JCM 12380 / KOD1) (Pyrococcus kodakaraensis (strain KOD1)).